The following is a 216-amino-acid chain: Ribosomal RNA small subunit methyltransferase G (216 aa).

Residues Gly-83, Met-88, 134-135 (VE), and Arg-149 contribute to the S-adenosyl-L-methionine site.

This sequence belongs to the methyltransferase superfamily. RNA methyltransferase RsmG family.

It localises to the cytoplasm. It carries out the reaction guanosine(527) in 16S rRNA + S-adenosyl-L-methionine = N(7)-methylguanosine(527) in 16S rRNA + S-adenosyl-L-homocysteine. Functionally, specifically methylates the N7 position of guanine in position 527 of 16S rRNA. This is Ribosomal RNA small subunit methyltransferase G from Pseudomonas entomophila (strain L48).